We begin with the raw amino-acid sequence, 69 residues long: Large ribosomal subunit protein bL31 (69 aa).

4 residues coordinate Zn(2+): Cys-16, Cys-18, Cys-38, and Cys-41.

Belongs to the bacterial ribosomal protein bL31 family. Type A subfamily. Part of the 50S ribosomal subunit. Zn(2+) is required as a cofactor.

Functionally, binds the 23S rRNA. The polypeptide is Large ribosomal subunit protein bL31 (Cutibacterium acnes (strain DSM 16379 / KPA171202) (Propionibacterium acnes)).